Consider the following 513-residue polypeptide: MSTNPKPQRKTKRNTNRRPQDVKFPGGGQIVGGVYLLPRRGPRLGVRATRKTSERSQPRGRRQPIPKARRPEGRAWAQPGYPWPLYGNEGLGWAGWLLSPRGSRPSWGPTDPRRRSRNLGKVIDTLTCGFADLMGYIPLVGAPLGGAARALAHGVRVLEDSVNYATGNLPGCSFSIFLLALLSCLTIPASAYEVRNVSGVYHVTNDCSNSSIVYEAADLIMHAPGCVPCVRENNSSRCWVALTPTLAARNTSIPTTTIRRHVDLLVGAATFCSAMYVGDLCGSVFLVSQLFTFSPRRHETLQDCNCSIYPGHLSGHRMAWDMMMNWSPTTALVVSQLLRIPQTVVDMVTGAHWGVLAGLAYYSMVGNWAKVLIVMLLFAGVDGTTHVTGGATGHTTSGIASLFLPGASQKIQLINTNGSWHINRTALNCNDSLNTGFLAALFYTHKFNASGCPERLASCRSIDGFDQGWGPITYTEPGDSDQKPYCWHYAPQRCSVVSAADVCGPVYCFTPSP.

Ser2 bears the N-acetylserine; by host mark. The segment at Ser2–Lys23 is interaction with STAT1. Positions Ser2 to Pro58 are interaction with EIF2AK2/PKR. An interaction with DDX3X region spans residues Ser2–Arg59. The segment at Ser2 to Ala75 is disordered. Topologically, residues Ser2–Asn168 are cytoplasmic. 2 consecutive short sequence motifs (nuclear localization signal) follow at residues Pro5–Arg13 and Pro38–Arg43. Over residues Pro7–Asn16 the composition is skewed to basic residues. A compositionally biased stretch (low complexity) spans Gly32–Arg47. Ser53 bears the Phosphoserine; by host mark. 2 short sequence motifs (nuclear localization signal) span residues Pro58–Pro64 and Pro66–Pro71. Over residues Pro58 to Ala68 the composition is skewed to basic residues. Phosphoserine; by host is present on Ser99. Residues Pro112–Ala152 form an important for endoplasmic reticulum and mitochondrial localization region. Ser116 carries the phosphoserine; by host PKA modification. The interaction with APOA2 stretch occupies residues Val122–Ser173. The interval Tyr164–Gly167 is important for lipid droplets localization. The helical transmembrane segment at Leu169–Ala189 threads the bilayer. Residues Leu178–Ala191 constitute a propeptide, ER anchor for the core protein, removed in mature form by host signal peptidase. The Lumenal portion of the chain corresponds to Ser190–Gly358. Residues Asn196, Asn209, Asn234, and Asn250 are each glycosylated (N-linked (GlcNAc...) asparagine; by host). Residues Leu265 to Arg296 are important for fusion. N-linked (GlcNAc...) asparagine; by host glycosylation is present at Asn305. The helical transmembrane segment at Leu359–Ala379 threads the bilayer. The Lumenal portion of the chain corresponds to Gly380–Pro513. Residues Thr385–Ile411 are HVR1. Asn417, Asn423, Asn430, and Asn448 each carry an N-linked (GlcNAc...) (high mannose) asparagine; by host glycan. Residues Tyr474–Asp479 form an HVR2 region. The tract at residues Ser480–Arg493 is CD81-binding 1.

This sequence belongs to the hepacivirus polyprotein family. As to quaternary structure, homooligomer. Interacts with E1 (via C-terminus). Interacts with the non-structural protein 5A. Interacts (via N-terminus) with host STAT1 (via SH2 domain); this interaction results in decreased STAT1 phosphorylation and ubiquitin-mediated proteasome-dependent STAT1 degradation, leading to decreased IFN-stimulated gene transcription. Interacts with host STAT3; this interaction constitutively activates STAT3. Interacts with host LTBR receptor. Interacts with host TNFRSF1A receptor and possibly induces apoptosis. Interacts with host HNRPK. Interacts with host YWHAE. Interacts with host UBE3A/E6AP. Interacts with host DDX3X. Interacts with host APOA2. Interacts with host RXRA protein. Interacts with host SP110 isoform 3/Sp110b; this interaction sequesters the transcriptional corepressor SP110 away from the nucleus. Interacts with host CREB3 nuclear transcription protein; this interaction triggers cell transformation. Interacts with host ACY3. Interacts with host C1QR1. Interacts with host RBM24; this interaction, which enhances the interaction of the mature core protein with 5'-UTR, may inhibit viral translation and favor replication. Interacts with host EIF2AK2/PKR; this interaction induces the autophosphorylation of EIF2AK2. Part of the viral assembly initiation complex composed of NS2, E1, E2, NS3, NS4A, NS5A and the mature core protein. In terms of assembly, forms a heterodimer with envelope glycoprotein E2. Interacts with mature core protein. Interacts with protease NS2. The heterodimer E1/E2 interacts with host CLDN1; this interaction plays a role in viral entry into host cell. Interacts with host SPSB2 (via C-terminus). Part of the viral assembly initiation complex composed of NS2, E1, E2, NS3, NS4A, NS5A and the mature core protein. Forms a heterodimer with envelope glycoprotein E1. Interacts with host CD81 and SCARB1 receptors; these interactions play a role in viral entry into host cell. Interacts with host EIF2AK2/PKR; this interaction inhibits EIF2AK2 and probably allows the virus to evade the innate immune response. Interacts with host CD209/DC-SIGN and CLEC4M/DC-SIGNR. Interact with host SPCS1; this interaction is essential for viral particle assembly. Interacts with protease NS2. The heterodimer E1/E2 interacts with host CLDN1; this interaction plays a role in viral entry into host cell. Part of the viral assembly initiation complex composed of NS2, E1, E2, NS3, NS4A, NS5A and the mature core protein. In terms of processing, specific enzymatic cleavages in vivo yield mature proteins. The structural proteins, core, E1, E2 and p7 are produced by proteolytic processing by host signal peptidases. The core protein precursor is synthesized as a 23 kDa, which is retained in the ER membrane through the hydrophobic signal peptide. Cleavage by the signal peptidase releases the 21 kDa mature core protein. The cleavage of the core protein precursor occurs between aminoacids 176 and 188 but the exact cleavage site is not known. Some degraded forms of the core protein appear as well during the course of infection. The other proteins (p7, NS2, NS3, NS4A, NS4B, NS5A and NS5B) are cleaved by the viral proteases. Autoprocessing between NS2 and NS3 is mediated by the NS2 cysteine protease catalytic domain and regulated by the NS3 N-terminal domain. Post-translationally, phosphorylated by host PKC and PKA. Ubiquitinated; mediated by UBE3A and leading to core protein subsequent proteasomal degradation. In terms of processing, highly N-glycosylated.

The protein localises to the host endoplasmic reticulum membrane. Its subcellular location is the host mitochondrion membrane. The protein resides in the virion. It is found in the host cytoplasm. It localises to the host nucleus. The protein localises to the host lipid droplet. Its subcellular location is the virion membrane. Functionally, packages viral RNA to form a viral nucleocapsid, and promotes virion budding. Participates in the viral particle production as a result of its interaction with the non-structural protein 5A. Binds RNA and may function as a RNA chaperone to induce the RNA structural rearrangements taking place during virus replication. Modulates viral translation initiation by interacting with viral IRES and 40S ribosomal subunit. Affects various cell signaling pathways, host immunity and lipid metabolism. Prevents the establishment of cellular antiviral state by blocking the interferon-alpha/beta (IFN-alpha/beta) and IFN-gamma signaling pathways and by blocking the formation of phosphorylated STAT1 and promoting ubiquitin-mediated proteasome-dependent degradation of STAT1. Activates STAT3 leading to cellular transformation. Regulates the activity of cellular genes, including c-myc and c-fos. May repress the promoter of p53, and sequester CREB3 and SP110 isoform 3/Sp110b in the cytoplasm. Represses cell cycle negative regulating factor CDKN1A, thereby interrupting an important check point of normal cell cycle regulation. Targets transcription factors involved in the regulation of inflammatory responses and in the immune response: suppresses TNF-induced NF-kappa-B activation, and activates AP-1. Binds to dendritic cells (DCs) via C1QR1, resulting in down-regulation of T-lymphocytes proliferation. Alters lipid metabolism by interacting with hepatocellular proteins involved in lipid accumulation and storage. Induces up-regulation of FAS promoter activity, and thereby contributes to the increased triglyceride accumulation in hepatocytes (steatosis). Forms a heterodimer with envelope glycoprotein E2, which mediates virus attachment to the host cell, virion internalization through clathrin-dependent endocytosis and fusion with host membrane. Fusion with the host cell is most likely mediated by both E1 and E2, through conformational rearrangements of the heterodimer required for fusion rather than a classical class II fusion mechanism. E1/E2 heterodimer binds host apolipoproteins such as APOB and ApoE thereby forming a lipo-viro-particle (LVP). APOE associated to the LVP allows the initial virus attachment to cell surface receptors such as the heparan sulfate proteoglycans (HSPGs), syndecan-1 (SDC1), syndecan-1 (SDC2), the low-density lipoprotein receptor (LDLR) and scavenger receptor class B type I (SCARB1). The cholesterol transfer activity of SCARB1 allows E2 exposure and binding of E2 to SCARB1 and the tetraspanin CD81. E1/E2 heterodimer binding on CD81 activates the epithelial growth factor receptor (EGFR) signaling pathway. Diffusion of the complex E1-E2-EGFR-SCARB1-CD81 to the cell lateral membrane allows further interaction with Claudin 1 (CLDN1) and occludin (OCLN) to finally trigger HCV entry. Its function is as follows. Forms a heterodimer with envelope glycoprotein E1, which mediates virus attachment to the host cell, virion internalization through clathrin-dependent endocytosis and fusion with host membrane. Fusion with the host cell is most likely mediated by both E1 and E2, through conformational rearrangements of the heterodimer required for fusion rather than a classical class II fusion mechanism. The interaction between envelope glycoprotein E2 and host apolipoprotein E/APOE allows the proper assembly, maturation and infectivity of the viral particles. This interaction is probably promoted via the up-regulation of cellular autophagy by the virus. E1/E2 heterodimer binds host apolipoproteins such as APOB and APOE thereby forming a lipo-viro-particle (LVP). APOE associated to the LVP allows the initial virus attachment to cell surface receptors such as the heparan sulfate proteoglycans (HSPGs), syndecan-1 (SDC1), syndecan-1 (SDC2), the low-density lipoprotein receptor (LDLR) and scavenger receptor class B type I (SCARB1). The cholesterol transfer activity of SCARB1 allows E2 exposure and binding of E2 to SCARB1 and the tetraspanin CD81. E1/E2 heterodimer binding on CD81 activates the epithelial growth factor receptor (EGFR) signaling pathway. Diffusion of the complex E1-E2-EGFR-SCARB1-CD81 to the cell lateral membrane allows further interaction with Claudin 1 (CLDN1) and occludin (OCLN) to finally trigger HCV entry. Inhibits host EIF2AK2/PKR activation, preventing the establishment of an antiviral state. Viral ligand for CD209/DC-SIGN and CLEC4M/DC-SIGNR, which are respectively found on dendritic cells (DCs), and on liver sinusoidal endothelial cells and macrophage-like cells of lymph node sinuses. These interactions allow the capture of circulating HCV particles by these cells and subsequent facilitated transmission to permissive cells such as hepatocytes and lymphocyte subpopulations. The protein is Genome polyprotein of Homo sapiens (Human).